The following is a 168-amino-acid chain: Ribosome maturation factor RimM (168 aa).

In terms of domain architecture, PRC barrel spans 95-168; that stretch reads EEGYYWSDLI…RITVDWGLDY (74 aa).

It belongs to the RimM family. Binds ribosomal protein uS19.

It localises to the cytoplasm. An accessory protein needed during the final step in the assembly of 30S ribosomal subunit, possibly for assembly of the head region. Essential for efficient processing of 16S rRNA. May be needed both before and after RbfA during the maturation of 16S rRNA. It has affinity for free ribosomal 30S subunits but not for 70S ribosomes. The sequence is that of Ribosome maturation factor RimM from Nitrosospira multiformis (strain ATCC 25196 / NCIMB 11849 / C 71).